A 944-amino-acid polypeptide reads, in one-letter code: Weak acid resistance protein 1 (944 aa).

The segment at residues 76 to 109 is a DNA-binding region (zn(2)-C6 fungal-type); it reads CVCCHSLKQKCEPSDVNDIYRKPCRRCLKHKKLC. Disordered regions lie at residues 114–171 and 197–225; these read SKRT…AKQF and SYGA…SVPT. Position 128 is a phosphothreonine (threonine 128). 2 stretches are compositionally biased toward polar residues: residues 135–144 and 205–225; these read VNVSTKSKGP and TTST…SVPT.

In terms of assembly, homodimer. In terms of processing, phosphorylation is required for PDR12 induction.

Its subcellular location is the nucleus. Its function is as follows. transcription factor which binds to a weak acid response element (WARE) to mediate stress induction of PDR12 and FUN34, encoding an acid transporter and a putative ammonia transporter, respectively. The polypeptide is Weak acid resistance protein 1 (WAR1) (Saccharomyces cerevisiae (strain ATCC 204508 / S288c) (Baker's yeast)).